The chain runs to 354 residues: Nicotinate-nucleotide--dimethylbenzimidazole phosphoribosyltransferase (354 aa).

Glutamate 322 serves as the catalytic Proton acceptor.

It belongs to the CobT family.

It catalyses the reaction 5,6-dimethylbenzimidazole + nicotinate beta-D-ribonucleotide = alpha-ribazole 5'-phosphate + nicotinate + H(+). It functions in the pathway nucleoside biosynthesis; alpha-ribazole biosynthesis; alpha-ribazole from 5,6-dimethylbenzimidazole: step 1/2. Catalyzes the synthesis of alpha-ribazole-5'-phosphate from nicotinate mononucleotide (NAMN) and 5,6-dimethylbenzimidazole (DMB). The protein is Nicotinate-nucleotide--dimethylbenzimidazole phosphoribosyltransferase of Solidesulfovibrio magneticus (strain ATCC 700980 / DSM 13731 / RS-1) (Desulfovibrio magneticus).